The primary structure comprises 178 residues: Inorganic pyrophosphatase (178 aa).

Substrate-binding residues include Lys-30, Arg-44, and Tyr-56. Positions 66, 71, and 103 each coordinate Mg(2+). Tyr-140 lines the substrate pocket.

It belongs to the PPase family. In terms of assembly, homohexamer. Requires Mg(2+) as cofactor.

The protein resides in the cytoplasm. It carries out the reaction diphosphate + H2O = 2 phosphate + H(+). In terms of biological role, catalyzes the hydrolysis of inorganic pyrophosphate (PPi) forming two phosphate ions. In Pyrococcus furiosus (strain ATCC 43587 / DSM 3638 / JCM 8422 / Vc1), this protein is Inorganic pyrophosphatase.